Reading from the N-terminus, the 436-residue chain is Glutamyl-tRNA reductase (436 aa).

Substrate-binding positions include 49–52 (TCNR), Ser109, 114–116 (EPQ), and Gln120. Cys50 serves as the catalytic Nucleophile. 189–194 (GAGEMC) is an NADP(+) binding site.

This sequence belongs to the glutamyl-tRNA reductase family. Homodimer.

The enzyme catalyses (S)-4-amino-5-oxopentanoate + tRNA(Glu) + NADP(+) = L-glutamyl-tRNA(Glu) + NADPH + H(+). It participates in porphyrin-containing compound metabolism; protoporphyrin-IX biosynthesis; 5-aminolevulinate from L-glutamyl-tRNA(Glu): step 1/2. In terms of biological role, catalyzes the NADPH-dependent reduction of glutamyl-tRNA(Glu) to glutamate 1-semialdehyde (GSA). In Pelobacter propionicus (strain DSM 2379 / NBRC 103807 / OttBd1), this protein is Glutamyl-tRNA reductase.